A 470-amino-acid chain; its full sequence is Ribulose bisphosphate carboxylase large chain (470 aa).

Lys5 bears the N6,N6,N6-trimethyllysine mark. Substrate contacts are provided by Asn114 and Thr164. Lys166 functions as the Proton acceptor in the catalytic mechanism. Residue Lys168 coordinates substrate. Mg(2+)-binding residues include Lys192, Asp194, and Glu195. An N6-carboxylysine modification is found at Lys192. The active-site Proton acceptor is His285. Residues Arg286, His318, and Ser370 each coordinate substrate.

Belongs to the RuBisCO large chain family. Type I subfamily. As to quaternary structure, heterohexadecamer of 8 large chains and 8 small chains; disulfide-linked. The disulfide link is formed within the large subunit homodimers. The cofactor is Mg(2+). Post-translationally, the disulfide bond which can form in the large chain dimeric partners within the hexadecamer appears to be associated with oxidative stress and protein turnover.

Its subcellular location is the plastid. It localises to the chloroplast. The enzyme catalyses 2 (2R)-3-phosphoglycerate + 2 H(+) = D-ribulose 1,5-bisphosphate + CO2 + H2O. It catalyses the reaction D-ribulose 1,5-bisphosphate + O2 = 2-phosphoglycolate + (2R)-3-phosphoglycerate + 2 H(+). Functionally, ruBisCO catalyzes two reactions: the carboxylation of D-ribulose 1,5-bisphosphate, the primary event in carbon dioxide fixation, as well as the oxidative fragmentation of the pentose substrate in the photorespiration process. Both reactions occur simultaneously and in competition at the same active site. In Bertiera breviflora, this protein is Ribulose bisphosphate carboxylase large chain.